Consider the following 466-residue polypeptide: A-type ATP synthase subunit B 2 (466 aa).

This sequence belongs to the ATPase alpha/beta chains family. Has multiple subunits with at least A(3), B(3), C, D, E, F, H, I and proteolipid K(x).

The protein resides in the cell membrane. In terms of biological role, component of the A-type ATP synthase that produces ATP from ADP in the presence of a proton gradient across the membrane. The B chain is a regulatory subunit. The chain is A-type ATP synthase subunit B 2 from Methanospirillum hungatei JF-1 (strain ATCC 27890 / DSM 864 / NBRC 100397 / JF-1).